The sequence spans 362 residues: Peptide chain release factor 1 (362 aa).

Residue Gln-237 is modified to N5-methylglutamine.

The protein belongs to the prokaryotic/mitochondrial release factor family. In terms of processing, methylated by PrmC. Methylation increases the termination efficiency of RF1.

It is found in the cytoplasm. Its function is as follows. Peptide chain release factor 1 directs the termination of translation in response to the peptide chain termination codons UAG and UAA. The polypeptide is Peptide chain release factor 1 (prfA) (Aquifex aeolicus (strain VF5)).